The chain runs to 319 residues: Exopolyphosphatase 2 (319 aa).

This sequence belongs to the GppA/Ppx family. As to quaternary structure, homodimer.

It catalyses the reaction [phosphate](n) + H2O = [phosphate](n-1) + phosphate + H(+). With respect to regulation, exopolyphosphatase activity is inhibited by ppGpp alarmones produced during the bacterial stringent response. Degradation of inorganic polyphosphates (polyP). Releases orthophosphate processively from the ends of the polyP chain. Prefers long-chain length polyphosphates as substrates. In Mycobacterium tuberculosis (strain CDC 1551 / Oshkosh), this protein is Exopolyphosphatase 2.